The following is a 299-amino-acid chain: Regucalcin (299 aa).

Glu-18 serves as a coordination point for a divalent metal cation. Residues Arg-101, Asn-103, and Glu-121 each coordinate substrate. Residues Asn-154 and Asp-204 each contribute to the a divalent metal cation site. Asp-204 serves as the catalytic Proton donor/acceptor. Residues Lys-244 and Lys-253 each carry the N6-succinyllysine modification.

It belongs to the SMP-30/CGR1 family. Monomer. It depends on Zn(2+) as a cofactor. The cofactor is Mn(2+). Requires Ca(2+) as cofactor. Mg(2+) serves as cofactor.

The protein resides in the cytoplasm. It catalyses the reaction D-glucono-1,5-lactone + H2O = D-gluconate + H(+). It participates in cofactor biosynthesis; L-ascorbate biosynthesis via UDP-alpha-D-glucuronate pathway; L-ascorbate from UDP-alpha-D-glucuronate: step 3/4. Functionally, gluconolactonase with low activity towards other sugar lactones, including gulonolactone and galactonolactone. Catalyzes a key step in ascorbic acid (vitamin C) biosynthesis. Can also hydrolyze diisopropyl phosphorofluoridate and phenylacetate (in vitro). Calcium-binding protein. Modulates Ca(2+) signaling, and Ca(2+)-dependent cellular processes and enzyme activities. In Sus scrofa (Pig), this protein is Regucalcin (RGN).